Consider the following 127-residue polypeptide: Riboflavin kinase (127 aa).

Residue 10 to 15 (GLGEGK) participates in CDP binding. Positions 39 and 41 each coordinate Mg(2+). Residues threonine 96 and glutamate 104 each contribute to the FMN site. A CDP-binding site is contributed by 109 to 112 (IQLR).

The protein belongs to the archaeal riboflavin kinase family. Mg(2+) is required as a cofactor.

The enzyme catalyses riboflavin + CTP = CDP + FMN + H(+). Its pathway is cofactor biosynthesis; FMN biosynthesis; FMN from riboflavin (CTP route): step 1/1. In terms of biological role, catalyzes the CTP-dependent phosphorylation of riboflavin (vitamin B2) to form flavin mononucleotide (FMN). The sequence is that of Riboflavin kinase from Methanococcus maripaludis (strain DSM 14266 / JCM 13030 / NBRC 101832 / S2 / LL).